Here is a 303-residue protein sequence, read N- to C-terminus: Pseudouridine-5'-phosphate glycosidase (303 aa).

The active-site Proton donor is glutamate 24. Substrate contacts are provided by lysine 85 and valine 105. Residue aspartate 137 coordinates Mn(2+). Residue 139 to 141 (SAD) coordinates substrate. Catalysis depends on lysine 158, which acts as the Nucleophile.

This sequence belongs to the pseudouridine-5'-phosphate glycosidase family. In terms of assembly, homotrimer. Requires Mn(2+) as cofactor.

It catalyses the reaction D-ribose 5-phosphate + uracil = psi-UMP + H2O. Its function is as follows. Catalyzes the reversible cleavage of pseudouridine 5'-phosphate (PsiMP) to ribose 5-phosphate and uracil. Functions biologically in the cleavage direction, as part of a pseudouridine degradation pathway. This chain is Pseudouridine-5'-phosphate glycosidase, found in Herpetosiphon aurantiacus (strain ATCC 23779 / DSM 785 / 114-95).